Consider the following 186-residue polypeptide: Probable nicotinate-nucleotide adenylyltransferase (186 aa).

It belongs to the NadD family.

The enzyme catalyses nicotinate beta-D-ribonucleotide + ATP + H(+) = deamido-NAD(+) + diphosphate. Its pathway is cofactor biosynthesis; NAD(+) biosynthesis; deamido-NAD(+) from nicotinate D-ribonucleotide: step 1/1. Its function is as follows. Catalyzes the reversible adenylation of nicotinate mononucleotide (NaMN) to nicotinic acid adenine dinucleotide (NaAD). This Tropheryma whipplei (strain TW08/27) (Whipple's bacillus) protein is Probable nicotinate-nucleotide adenylyltransferase.